The chain runs to 339 residues: Ketol-acid reductoisomerase (NADP(+)) (339 aa).

The KARI N-terminal Rossmann domain occupies 1-182 (MRVYYDRDAD…GGGRSGIIET (182 aa)). Residues 24–27 (YGSQ), Lys-48, Ser-51, Thr-53, and 83–86 (DELQ) contribute to the NADP(+) site. The active site involves His-108. NADP(+) is bound at residue Gly-134. One can recognise a KARI C-terminal knotted domain in the interval 183-328 (NFREECETDL…AKLRAMMPWI (146 aa)). Mg(2+) contacts are provided by Asp-191, Glu-195, Glu-227, and Glu-231. Ser-252 lines the substrate pocket.

This sequence belongs to the ketol-acid reductoisomerase family. Mg(2+) is required as a cofactor.

The enzyme catalyses (2R)-2,3-dihydroxy-3-methylbutanoate + NADP(+) = (2S)-2-acetolactate + NADPH + H(+). It carries out the reaction (2R,3R)-2,3-dihydroxy-3-methylpentanoate + NADP(+) = (S)-2-ethyl-2-hydroxy-3-oxobutanoate + NADPH + H(+). It functions in the pathway amino-acid biosynthesis; L-isoleucine biosynthesis; L-isoleucine from 2-oxobutanoate: step 2/4. It participates in amino-acid biosynthesis; L-valine biosynthesis; L-valine from pyruvate: step 2/4. Its function is as follows. Involved in the biosynthesis of branched-chain amino acids (BCAA). Catalyzes an alkyl-migration followed by a ketol-acid reduction of (S)-2-acetolactate (S2AL) to yield (R)-2,3-dihydroxy-isovalerate. In the isomerase reaction, S2AL is rearranged via a Mg-dependent methyl migration to produce 3-hydroxy-3-methyl-2-ketobutyrate (HMKB). In the reductase reaction, this 2-ketoacid undergoes a metal-dependent reduction by NADPH to yield (R)-2,3-dihydroxy-isovalerate. This Mesorhizobium japonicum (strain LMG 29417 / CECT 9101 / MAFF 303099) (Mesorhizobium loti (strain MAFF 303099)) protein is Ketol-acid reductoisomerase (NADP(+)).